Here is a 46-residue protein sequence, read N- to C-terminus: Esculentin-1A (46 aa).

Cysteine 40 and cysteine 46 form a disulfide bridge.

Belongs to the frog skin active peptide (FSAP) family. Brevinin subfamily. In terms of tissue distribution, expressed by the skin glands.

The protein resides in the secreted. Its function is as follows. Shows antibacterial activity against representative Gram-negative and Gram-positive bacterial species, and hemolytic activity. The chain is Esculentin-1A from Pelophylax lessonae (Pool frog).